A 274-amino-acid polypeptide reads, in one-letter code: Probable eukaryotic translation initiation factor 3 subunit J (274 aa).

2 disordered regions span residues 1–110 (MDSW…KEAM) and 207–245 (KEQQEKTQSKRGAAAPAAKPVSTAAPSKKGGKPTVNVNS). A compositionally biased stretch (acidic residues) spans 38–47 (DEEDEDEEEN). The span at 52–73 (QNDSHSVSQKSSSSSQNDQGSN) shows a compositional bias: low complexity. Residues 82-110 (IQERNFEKAIKASEAAAKEESLESSKEAM) show a composition bias toward basic and acidic residues. Residues 219–234 (AAAPAAKPVSTAAPSK) show a composition bias toward low complexity.

This sequence belongs to the eIF-3 subunit J family. Component of the eukaryotic translation initiation factor 3 (eIF-3) complex. The eIF-3 complex appears to include tif32/eif3a, SPAC25G10.08/eif3b, tif33/eif3c, SPBC4C3.07/eif3f, tif35/eif3g and sum1/eif3i. This set of common subunits may also associate exclusively with either moe1/eif3d and int6/eif3e, or with SPAC821.05/eif3h and SPAC1751.03/eif3m. The eIF-3 complex may also include SPAC3A12.13c/eif3j. Interacts with sad1.

The protein localises to the cytoplasm. Component of the eukaryotic translation initiation factor 3 (eIF-3) complex, which is involved in protein synthesis of a specialized repertoire of mRNAs and, together with other initiation factors, stimulates binding of mRNA and methionyl-tRNAi to the 40S ribosome. The eIF-3 complex specifically targets and initiates translation of a subset of mRNAs involved in cell proliferation. The polypeptide is Probable eukaryotic translation initiation factor 3 subunit J (Schizosaccharomyces pombe (strain 972 / ATCC 24843) (Fission yeast)).